A 456-amino-acid chain; its full sequence is Phosphomethylpyrimidine synthase (456 aa).

Residues Asn80, Met109, Tyr139, His175, 195-197 (SRG), 236-239 (DSLR), and Glu275 contribute to the substrate site. His279 contacts Zn(2+). Tyr302 is a substrate binding site. His343 serves as a coordination point for Zn(2+). The [4Fe-4S] cluster site is built by Cys423, Cys426, and Cys431.

Belongs to the ThiC family. [4Fe-4S] cluster serves as cofactor.

It carries out the reaction 5-amino-1-(5-phospho-beta-D-ribosyl)imidazole + S-adenosyl-L-methionine = 4-amino-2-methyl-5-(phosphooxymethyl)pyrimidine + CO + 5'-deoxyadenosine + formate + L-methionine + 3 H(+). It participates in cofactor biosynthesis; thiamine diphosphate biosynthesis. Its function is as follows. Catalyzes the synthesis of the hydroxymethylpyrimidine phosphate (HMP-P) moiety of thiamine from aminoimidazole ribotide (AIR) in a radical S-adenosyl-L-methionine (SAM)-dependent reaction. This is Phosphomethylpyrimidine synthase from Prochlorococcus marinus (strain MIT 9215).